The primary structure comprises 1189 residues: Ras-specific guanine nucleotide-releasing factor 2 (1189 aa).

The 112-residue stretch at 22–133 folds into the PH 1 domain; the sequence is EGTKRGFLSK…WMEAIHQASY (112 aa). Residues 158–193 are a coiled coil; sequence KIATNQLRHQLEDQDTEIERLKSEIVALNKTKERMR. Positions 205–234 constitute an IQ domain; that stretch reads DIKKIKKVQSFMRGWLCRRKWKTIVQDYIC. One can recognise a DH domain in the interval 243-429; sequence KRNQIVFTMV…EELSRVMHDE (187 aa). The PH 2 domain maps to 470–588; it reads PSVERGKLSK…WMSDISQCVD (119 aa). Residues 635–755 enclose the N-terminal Ras-GEF domain; sequence KVPQIRYASV…LTSSLNSRIG (121 aa). Residues 713–738 are disordered; the sequence is VDGKSPRLCRKFSSPPPLAVSRTSSP. A phosphoserine mark is found at Ser725 and Ser726. Ser736 is subject to Phosphoserine; by CDK5. Positions 743-751 are regulates proteasomal degradation; sequence KLSLTSSLN. Phosphoserine is present on residues Ser745 and Ser749. A disordered region spans residues 757–817; it reads LDLTNSSSSS…TPRHLRYRQP (61 aa). The segment covering 762-776 has biased composition (low complexity); sequence SSSSSSPTTTTHSPA. A phosphoserine mark is found at Ser801, Ser805, and Ser924. The Ras-GEF domain maps to 954-1186; it reads SAMELAEQIT…YELSLKIEPR (233 aa). The segment at 1051-1080 is responsible of the affinity for farnesylated versus geranylgeranylated Ras; that stretch reads ALNRSAIYRLKKTWAKVSKQTKALMDKLQK.

In terms of assembly, homooligomer and heterooligomer with RASGRF1. Interacts with Ras and RAC1. Interacts in a calcium-dependent manner with calmodulin. Interacts with EPB49 and probably CDK5R1. Interacts with the AMPA receptor through GRIA1. Interacts with microtubules. Phosphorylated by CDK5; down-regulates RASGRF2-mediated RAC1 activation. In terms of processing, ubiquitinated upon interaction with Ras. Ubiquitination leads to degradation through the 26S proteasome. Expressed in brain in the nucleus of the solitary tract. Not observed in the hippocampus (at protein level).

The protein localises to the cytoplasm. It localises to the cell membrane. Its subcellular location is the endoplasmic reticulum membrane. Functionally, functions as a calcium-regulated nucleotide exchange factor activating both Ras and RAC1 through the exchange of bound GDP for GTP. Preferentially activates HRAS in vivo compared to RRAS based on their different types of prenylation. Functions in synaptic plasticity by contributing to the induction of long term potentiation. This is Ras-specific guanine nucleotide-releasing factor 2 (Rasgrf2) from Mus musculus (Mouse).